Consider the following 597-residue polypeptide: Elongation factor 4 (597 aa).

One can recognise a tr-type G domain in the interval 2 to 184; the sequence is KNIRNFSIIA…RLVRDIPAPE (183 aa). GTP is bound by residues 14 to 19 and 131 to 134; these read DHGKST and NKID.

The protein belongs to the TRAFAC class translation factor GTPase superfamily. Classic translation factor GTPase family. LepA subfamily.

It is found in the cell inner membrane. It carries out the reaction GTP + H2O = GDP + phosphate + H(+). Required for accurate and efficient protein synthesis under certain stress conditions. May act as a fidelity factor of the translation reaction, by catalyzing a one-codon backward translocation of tRNAs on improperly translocated ribosomes. Back-translocation proceeds from a post-translocation (POST) complex to a pre-translocation (PRE) complex, thus giving elongation factor G a second chance to translocate the tRNAs correctly. Binds to ribosomes in a GTP-dependent manner. The chain is Elongation factor 4 from Edwardsiella ictaluri (strain 93-146).